A 272-amino-acid polypeptide reads, in one-letter code: Glutamate racemase (272 aa).

Substrate-binding positions include Asp16–Ser17 and Tyr48–Gly49. The active-site Proton donor/acceptor is Cys79. Substrate is bound at residue Asn80 to Thr81. Catalysis depends on Cys191, which acts as the Proton donor/acceptor. Thr192–His193 is a substrate binding site.

Belongs to the aspartate/glutamate racemases family.

It carries out the reaction L-glutamate = D-glutamate. It participates in cell wall biogenesis; peptidoglycan biosynthesis. In terms of biological role, provides the (R)-glutamate required for cell wall biosynthesis. This Chlorobium phaeobacteroides (strain DSM 266 / SMG 266 / 2430) protein is Glutamate racemase.